A 125-amino-acid chain; its full sequence is Large ribosomal subunit protein bL17 (125 aa).

Belongs to the bacterial ribosomal protein bL17 family. In terms of assembly, part of the 50S ribosomal subunit. Contacts protein L32.

This chain is Large ribosomal subunit protein bL17, found in Acinetobacter baumannii (strain AB0057).